Consider the following 443-residue polypeptide: F-box only protein 39 (443 aa).

An F-box domain is found at 16–61 (WATLPDVCLRRVFWWLGDRDRSRAALVCRKWNQMMYSADLWRYRTI).

In terms of assembly, directly interacts with SKP1 and CUL1.

Functionally, substrate-recognition component of the SCF (SKP1-CUL1-F-box protein)-type E3 ubiquitin ligase complex. The polypeptide is F-box only protein 39 (FBXO39) (Bos taurus (Bovine)).